Here is a 450-residue protein sequence, read N- to C-terminus: Ribosomal protein uS12 methylthiotransferase RimO (450 aa).

Residues 16–126 (PRISFVSLGC…VLDAVHQAVP (111 aa)) form the MTTase N-terminal domain. The [4Fe-4S] cluster site is built by Cys-25, Cys-61, Cys-90, Cys-157, Cys-161, and Cys-164. The Radical SAM core domain maps to 143–380 (LTPRHYAYLK…MLKQQAISAR (238 aa)). One can recognise a TRAM domain in the interval 383 to 449 (KRKVGTRQQV…AYDLIGSAVG (67 aa)).

It belongs to the methylthiotransferase family. RimO subfamily. [4Fe-4S] cluster is required as a cofactor.

The protein resides in the cytoplasm. The catalysed reaction is L-aspartate(89)-[ribosomal protein uS12]-hydrogen + (sulfur carrier)-SH + AH2 + 2 S-adenosyl-L-methionine = 3-methylsulfanyl-L-aspartate(89)-[ribosomal protein uS12]-hydrogen + (sulfur carrier)-H + 5'-deoxyadenosine + L-methionine + A + S-adenosyl-L-homocysteine + 2 H(+). Catalyzes the methylthiolation of an aspartic acid residue of ribosomal protein uS12. This chain is Ribosomal protein uS12 methylthiotransferase RimO, found in Azorhizobium caulinodans (strain ATCC 43989 / DSM 5975 / JCM 20966 / LMG 6465 / NBRC 14845 / NCIMB 13405 / ORS 571).